The primary structure comprises 381 residues: tRNA (guanine(6)-N2)-methyltransferase (381 aa).

In terms of domain architecture, THUMP spans 43 to 157 (KLIPKINYLS…FDELIVGIDT (115 aa)). S-adenosyl-L-methionine-binding positions include 173–177 (HPAHL), 204–206 (SGT), D261, 289–290 (DA), and N306.

It belongs to the methyltransferase superfamily.

The protein localises to the cytoplasm. The catalysed reaction is guanosine(6) in tRNA + S-adenosyl-L-methionine = N(2)-methylguanosine(6) in tRNA + S-adenosyl-L-homocysteine + H(+). Functionally, S-adenosyl-L-methionine-dependent methyltransferase that catalyzes the methylation of the guanosine nucleotide at position 6 (m2G6) in tRNA(Cys). In Methanocaldococcus jannaschii (strain ATCC 43067 / DSM 2661 / JAL-1 / JCM 10045 / NBRC 100440) (Methanococcus jannaschii), this protein is tRNA (guanine(6)-N2)-methyltransferase.